Reading from the N-terminus, the 350-residue chain is LysM domain-containing GPI-anchored protein 2 (350 aa).

The first 23 residues, 1–23 (METSCFTLLGLLVSLSFFLTLSA), serve as a signal peptide directing secretion. Residues Asn30, Asn48, Asn76, and Asn99 are each glycosylated (N-linked (GlcNAc...) asparagine). Intrachain disulfides connect Cys31–Cys97, Cys38–Cys161, Cys95–Cys159, and Cys97–Cys161. 2 consecutive LysM domains span residues 108-155 (IEYT…KFWI) and 172-216 (YAHV…PLDV). Residues 114–120 (KDDILSF) and 142–149 (PDPNKIEI) each bind chitin. Residues Asn193, Asn238, Asn258, Asn289, and Asn305 are each glycosylated (N-linked (GlcNAc...) asparagine). 2 cysteine pairs are disulfide-bonded: Cys221–Cys253 and Cys248–Cys277. Asp318 is lipidated: GPI-anchor amidated aspartate. A propeptide spans 319–350 (SAGPDNYASTLSSSFNFVIVLIQCALLCLCLL) (removed in mature form).

Forms homooligomers. Interacts with CERK1. Binds to chitin oligosaccharide elicitor.

Its subcellular location is the cell membrane. Functionally, chitin elicitor-binding protein involved in the perception of chitin oligosaccharide elicitor. This Arabidopsis thaliana (Mouse-ear cress) protein is LysM domain-containing GPI-anchored protein 2 (LYM2).